We begin with the raw amino-acid sequence, 368 residues long: SH3 domain-containing protein 2 (368 aa).

Coiled coils occupy residues 1 to 21 and 146 to 210; these read MDAIRKQASRLREQVARQQQA and LEDA…LGKE. The 264-residue stretch at 1–264 folds into the BAR domain; sequence MDAIRKQASR…MVSERQRIEA (264 aa). The tract at residues 258-281 is disordered; the sequence is ERQRIEAPSTPSSADSMPPPPSYE. The SH3 domain occupies 299–358; that stretch reads MGYFLGEVLFPYHGVTDVELSLSTGEYVVVRKVTGSGWAEGECKGKAGWFPYGYIERRER.

Homodimer. Interacts with FREE1. Interacts (via SH3 domain) with ATG8E and ATG8F. Component of a phosphoinositide 3-kinase (PI3K) complex containing ATG6, SH3P2 and FREE1. Binds to SH3P3 and DRP1A. Forms a complex made of SH3P2 and DRP1A and triggers its accumulation at the cell plate. As to expression, highly expressed in seedlings. Detected in flowers, leaves and stems.

The protein localises to the cytoplasm. It is found in the cytoplasmic vesicle. The protein resides in the clathrin-coated vesicle. It localises to the cell membrane. Its subcellular location is the late endosome. The protein localises to the autophagosome membrane. Its function is as follows. Regulator for autophaosome formation and/or maturation. Binds phosphatidylinositol-phosphate; highest affinity for vesicles containing PtdIns(3,4,5)P(3), followed by those containing PtdIns(4,5)P(2) and PtdIns(3,4)P(2), with minimal binding to phosphatidylinositol monophosphates, including PtdIns(3)P. Together with DRP1A, converts the fused vesicles to tubular structures at the cell plate during cytokinesis. This chain is SH3 domain-containing protein 2, found in Arabidopsis thaliana (Mouse-ear cress).